A 368-amino-acid polypeptide reads, in one-letter code: Metacaspase-6 (368 aa).

Residues H86 and C139 contribute to the active site. At C139 the chain carries S-nitrosocysteine. The segment at 153 to 174 (GESTKKKKDSGDSSTINKETEA) is disordered.

This sequence belongs to the peptidase C14B family. Proteolytically processed; by an autocatalytic mechanism. In terms of tissue distribution, expressed in roots and flower buds.

The sequence is that of Metacaspase-6 (AMC6) from Arabidopsis thaliana (Mouse-ear cress).